The following is a 185-amino-acid chain: Recombination protein RecR (185 aa).

A C4-type zinc finger spans residues 44–59; the sequence is CSVCFHLSSEPVCEIC. One can recognise a Toprim domain in the interval 67–161; the sequence is NTICVVADSR…KVTRIAFGLP (95 aa).

It belongs to the RecR family.

Its function is as follows. May play a role in DNA repair. It seems to be involved in an RecBC-independent recombinational process of DNA repair. It may act with RecF and RecO. The polypeptide is Recombination protein RecR (Trichormus variabilis (strain ATCC 29413 / PCC 7937) (Anabaena variabilis)).